A 324-amino-acid polypeptide reads, in one-letter code: Olfactory receptor 1L3 (324 aa).

Topologically, residues 1–25 (MGMSNLTRLSEFILLGLSSRSEDQR) are extracellular. Residue asparagine 5 is glycosylated (N-linked (GlcNAc...) asparagine). A helical membrane pass occupies residues 26–49 (PLFALFLIIYLVTLMGNLLIILAI). Topologically, residues 50–57 (HSDPRLQN) are cytoplasmic. The helical transmembrane segment at 58 to 79 (PMYFFLSILSFADICYTTVIVP) threads the bilayer. Over 80 to 100 (KMLVNFLSEKKTISYAECLAQ) the chain is Extracellular. Cysteines 97 and 189 form a disulfide. A helical membrane pass occupies residues 101–120 (MYFFLVFGNIDSYLLAAMAI). The Cytoplasmic portion of the chain corresponds to 121–139 (NRCVAICNPFHYVTVMNRR). A helical membrane pass occupies residues 140–158 (CCVLLLAFPITFSYFHSLL). At 159–196 (HVLLVNRLTFCTSNVIHHFFCDVNPVLKLSCSSTFVNE) the chain is on the extracellular side. A helical membrane pass occupies residues 197–219 (IVAMTEGLASVMAPFVCIIISYL). Topologically, residues 220-236 (RILIAVLKIPSAAGKHK) are cytoplasmic. Residues 237 to 259 (AFSTCSSHLTVVILFYGSISYVY) traverse the membrane as a helical segment. At 260–271 (LQPLSSYTVKDR) the chain is on the extracellular side. A helical transmembrane segment spans residues 272–291 (IATINYTVLTSVLNPFIYSL). Residues 292–324 (RNKDMKRGLQKLINKIKSQMSRFSTKTNKICGP) lie on the Cytoplasmic side of the membrane.

The protein belongs to the G-protein coupled receptor 1 family.

The protein localises to the cell membrane. Its function is as follows. Odorant receptor. The sequence is that of Olfactory receptor 1L3 (OR1L3) from Homo sapiens (Human).